The following is a 505-amino-acid chain: MNNLYIFHYHYIKGGVSTVVRNIVKSLKDAYKITLFGSKKMGIDGIEEVLSYENVDFIDFPELGYIYYDSTDYKTFLELKESIKNKLNNYHDERAIYWAHNYNLGKNPAFTEAFKEFITTKNIPTIIQIHDFPECARWENYSFIRKFINSSLYPIRKNIQYATINLSDYNRLIKCGIPSENAFYLPNAVEFAKNKDKIDDIDKDEVINKLKKLGYNVDPTNKNILYPTRTIRRKNILEAVLINRLYGKSNLLVTLPANSDKERPYEKVVKETFESEKVKGAWAISAKDPSLFPYILNISDLFFSSSVLEGFGMIYLESKFNEKNFLTRKLDVIEDFKNIKEISYYDRFLVSLSPKEINKVKEKYEEQINKIPISEENKNHLRQDLNNKFDKDLIDFSFLPVELQKKFCMEEEAKLNDLKEINKEIFDKIEMLTSTNHIDQGINLEDFSLKAYKSKIFLLLDKVQARGNAPKGVQGSTKEIEDTIIDENILKSFLTIDNIRLLFSY.

Monomer in solution.

The enzyme catalyses (2R)-2-O-(alpha-D-glucopyranosyl)-3-phospho-glycerate + GDP-alpha-D-mannose = (2R)-2-O-[alpha-D-mannopyranosyl-(1-&gt;2)-alpha-D-glucopyranosyl]-3-phospho-glycerate + GDP + H(+). Its activity is regulated as follows. Not strictly dependent on divalent cations, but the presence of Mn(2+), Ca(2+), Mg(2+) or Co(2+) stimulates activity. Involved in the biosynthesis of the compatible solute mannosylglucosylglycerate through a phosphorylating pathway. Catalyzes the conversion of glucosyl-3-phosphoglycerate (GPG) to mannosylglucosyl-3-phosphoglycerate (MGPG). The polypeptide is Mannosylglucosyl-3-phosphoglycerate synthase (Petrotoga mobilis (strain DSM 10674 / SJ95)).